A 743-amino-acid chain; its full sequence is Amylovoran biosynthesis protein AmsF (743 aa).

The first 27 residues, 1–27, serve as a signal peptide directing secretion; sequence MKRRELIRTAFSTIVATAALSSVSARA.

The protein to R.meliloti ExoP.

It is found in the periplasm. It functions in the pathway glycan metabolism; exopolysaccharide biosynthesis. Involved in the biosynthesis of amylovoran which functions as a virulence factor. May be involved in the polymerization or late modification of the repeating units. The protein is Amylovoran biosynthesis protein AmsF (amsF) of Erwinia amylovora (Fire blight bacteria).